A 206-amino-acid polypeptide reads, in one-letter code: MGNKWSKCSTVGRPAIRERMRRAPAAEGVGPASQDSDKYGALTSSSTPANNADCAWLEAQQEEEEVGFPVRPQVPLRPMTYKAVVDLSFFLEEKGGLEGLIYSKKRQDILDLWVYNTQGYFPDWQNYTPGPGVRFPLTFGWCFKLVPVDPREVEEANTGENNSLLHPMSLHGMEDSHREVLQWKFDSLLARRHMARELHPEYYKDC.

The interval 1-46 is disordered; it reads MGNKWSKCSTVGRPAIRERMRRAPAAEGVGPASQDSDKYGALTSSS. Glycine 2 carries the N-myristoyl glycine; by host lipid modification. Residue serine 6 is modified to Phosphoserine; by host. The acidic; interacts with host PACS1 and PACS2; stabilizes the interaction of NEF/MHC-I with host AP1M1; necessary for MHC-I internalization stretch occupies residues 61–65; sequence QEEEE. The SH3-binding; interaction with Src family tyrosine kinases stretch occupies residues 69–78; sequence PVRPQVPLRP. The short motif at 72 to 75 is the PxxP; stabilizes the interaction of NEF/MHC-I with host AP1M1; necessary for MHC-I internalization element; it reads PQVP. A mediates dimerization, Nef-PTE1 interaction region spans residues 108–124; the sequence is DILDLWVYNTQGYFPDW. Residues 148–180 are binding to ATP6V1H; the sequence is VDPREVEEANTGENNSLLHPMSLHGMEDSHREV. Residues 164-165 carry the Dileucine internalization motif; necessary for CD4 internalization motif; that stretch reads LL. Positions 174–175 match the Diacidic; necessary for CD4 internalization motif; it reads ED.

The protein belongs to the lentivirus primate group Nef protein family. Monomer; cytosolic form. Homodimer; membrane bound form. Interacts with Nef associated p21-activated kinase (PAK2); this interaction activates PAK2. Associates with the Nef-MHC-I-AP1 complex; this complex is required for MHC-I internalization. Interacts (via C-terminus) with host PI3-kinase. Interacts with host PACS1; this interaction seems to be weak. Interacts with host PACS2. Interacts with host LCK and MAPK3; these interactions inhibit the kinase activity of the latter. Interacts with host ATP6V1H; this interaction may play a role in CD4 endocytosis. Associates with the CD4-Nef-AP2 complex; this complex is required for CD4 internalization. Interacts with host AP2 subunit alpha and AP2 subunit sigma2. Interacts with TCR-zeta chain; this interaction up-regulates the Fas ligand (FasL) surface expression. Interacts with host HCK, LYN, and SRC; these interactions activate the Src family kinases. Interacts with MAP3K5; this interaction inhibits the Fas and TNFR-mediated death signals. Interacts with beta-COP and PTE1. Interacts with human RACK1; this increases Nef phosphorylation by PKC. Interacts with TP53; this interaction decreases the half-life of TP53, protecting the infected cell against p53-mediated apoptosis. The virion-associated Nef proteins are cleaved by the viral protease to release the soluble C-terminal core protein. Nef is probably cleaved concomitantly with viral structural proteins on maturation of virus particles. In terms of processing, myristoylated. Post-translationally, phosphorylated on serine residues, probably by host PKCdelta and theta.

It is found in the host cell membrane. It localises to the virion. The protein localises to the secreted. Its subcellular location is the host Golgi apparatus membrane. Its function is as follows. Factor of infectivity and pathogenicity, required for optimal virus replication. Alters numerous pathways of T-lymphocyte function and down-regulates immunity surface molecules in order to evade host defense and increase viral infectivity. Alters the functionality of other immunity cells, like dendritic cells, monocytes/macrophages and NK cells. Functionally, in infected CD4(+) T-lymphocytes, down-regulates the surface MHC-I, mature MHC-II, CD4, CD28, CCR5 and CXCR4 molecules. Mediates internalization and degradation of host CD4 through the interaction of with the cytoplasmic tail of CD4, the recruitment of AP-2 (clathrin adapter protein complex 2), internalization through clathrin coated pits, and subsequent transport to endosomes and lysosomes for degradation. Diverts host MHC-I molecules to the trans-Golgi network-associated endosomal compartments by an endocytic pathway to finally target them for degradation. MHC-I down-regulation may involve AP-1 (clathrin adapter protein complex 1) or possibly Src family kinase-ZAP70/Syk-PI3K cascade recruited by PACS2. In consequence infected cells are masked for immune recognition by cytotoxic T-lymphocytes. Decreasing the number of immune receptors also prevents reinfection by more HIV particles (superinfection). Down-regulates host SERINC3 and SERINC5 thereby excluding these proteins from the viral particles. Virion infectivity is drastically higher when SERINC3 or SERINC5 are excluded from the viral envelope, because these host antiviral proteins impair the membrane fusion event necessary for subsequent virion penetration. Bypasses host T-cell signaling by inducing a transcriptional program nearly identical to that of anti-CD3 cell activation. Interaction with TCR-zeta chain up-regulates the Fas ligand (FasL). Increasing surface FasL molecules and decreasing surface MHC-I molecules on infected CD4(+) cells send attacking cytotoxic CD8+ T-lymphocytes into apoptosis. In terms of biological role, plays a role in optimizing the host cell environment for viral replication without causing cell death by apoptosis. Protects the infected cells from apoptosis in order to keep them alive until the next virus generation is ready to strike. Inhibits the Fas and TNFR-mediated death signals by blocking MAP3K5/ASK1. Decreases the half-life of TP53, protecting the infected cell against p53-mediated apoptosis. Inhibits the apoptotic signals regulated by the Bcl-2 family proteins through the formation of a Nef/PI3-kinase/PAK2 complex that leads to activation of PAK2 and induces phosphorylation of host BAD. Its function is as follows. Extracellular Nef protein targets CD4(+) T-lymphocytes for apoptosis by interacting with CXCR4 surface receptors. This Human immunodeficiency virus type 1 group M subtype C (isolate 92BR025) (HIV-1) protein is Protein Nef.